A 509-amino-acid polypeptide reads, in one-letter code: Solute carrier family 2, facilitated glucose transporter member 4 (509 aa).

Over 1–23 (MPSGFQQIGSDDGEPPRQRVTGT) the chain is Cytoplasmic. Residues 7–13 (QIGSDDG) are interaction with SRFBP1. A Phosphoserine modification is found at serine 10. Residues 24 to 44 (LVLAVFSAVLGSLQFGYNIGV) form a helical membrane-spanning segment. The Extracellular segment spans residues 45–80 (INAPQKVIEQSYNATWLGRQGPGGPDSIPQGTLTTL). N-linked (GlcNAc...) asparagine glycosylation occurs at asparagine 57. The chain crosses the membrane as a helical span at residues 81 to 101 (WALSVAIFSVGGMISSFLIGI). The Cytoplasmic segment spans residues 102-110 (ISQWLGRKR). Residues 111–131 (AMLANNVLAVLGGALMGLANA) traverse the membrane as a helical segment. Residues 132–141 (AASYEILILG) lie on the Extracellular side of the membrane. The helical transmembrane segment at 142 to 162 (RFLIGAYSGLTSGLVPMYVGE) threads the bilayer. Topologically, residues 163–170 (IAPTHLRG) are cytoplasmic. A helical membrane pass occupies residues 171-191 (ALGTLNQLAIVIGILVAQVLG). Glutamine 177 provides a ligand contact to D-glucose. Residues 192–200 (LESMLGTAT) lie on the Extracellular side of the membrane. A helical transmembrane segment spans residues 201-221 (LWPLLLALTVLPALLQLILLP). Residues 222–286 (FCPESPRYLY…QLLGSRTHRQ (65 aa)) are Cytoplasmic-facing. Residue cysteine 223 is the site of S-palmitoyl cysteine attachment. Serine 274 carries the post-translational modification Phosphoserine; by SGK1. Residues 287 to 307 (PLIIAVVLQLSQQLSGINAVF) traverse the membrane as a helical segment. Residues 298-299 (QQ) and asparagine 304 contribute to the D-glucose site. The Extracellular portion of the chain corresponds to 308–322 (YYSTSIFESAGVGQP). A helical membrane pass occupies residues 323–343 (AYATIGAGVVNTVFTLVSVLL). Residue asparagine 333 participates in D-glucose binding. Over 344–352 (VERAGRRTL) the chain is Cytoplasmic. The chain crosses the membrane as a helical span at residues 353 to 373 (HLLGLAGMCGCAILMTVALLL). At 374 to 384 (LERVPAMSYVS) the chain is on the extracellular side. A helical transmembrane segment spans residues 385–405 (IVAIFGFVAFFEIGPGPIPWF). D-glucose contacts are provided by glutamate 396 and tryptophan 404. At 406–416 (IVAELFSQGPR) the chain is on the cytoplasmic side. The chain crosses the membrane as a helical span at residues 417-437 (PAAMAVAGFSNWTCNFIVGMG). Over 438-444 (FQYVADA) the chain is Extracellular. The chain crosses the membrane as a helical span at residues 445 to 465 (MGPYVFLLFAVLLLGFFIFTF). The Cytoplasmic portion of the chain corresponds to 466-508 (LKVPETRGRTFDQISAAFRRTPSLLEQEVKPSTELEYLGPDEN). The residue at position 486 (threonine 486) is a Phosphothreonine. Serine 488 bears the Phosphoserine mark. The Dileucine internalization motif motif lies at 489–490 (LL).

It belongs to the major facilitator superfamily. Sugar transporter (TC 2.A.1.1) family. Glucose transporter subfamily. In terms of assembly, binds to DAXX. Interacts via its N-terminus with SRFBP1. Interacts with NDUFA9. Interacts with TRARG1; the interaction is required for proper SLC2A4 recycling after insulin stimulation. Sumoylated. Post-translationally, palmitoylated. Palmitoylation by ZDHHC7 controls the insulin-dependent translocation of GLUT4 to the plasma membrane. In terms of tissue distribution, expressed in skeletal and cardiac muscles. Expressed in brown and white adipose tissues.

Its subcellular location is the cell membrane. It is found in the endomembrane system. The protein resides in the cytoplasm. The protein localises to the perinuclear region. It carries out the reaction D-glucose(out) = D-glucose(in). Functionally, insulin-regulated facilitative glucose transporter, which plays a key role in removal of glucose from circulation. Response to insulin is regulated by its intracellular localization: in the absence of insulin, it is efficiently retained intracellularly within storage compartments in muscle and fat cells. Upon insulin stimulation, translocates from these compartments to the cell surface where it transports glucose from the extracellular milieu into the cell. This chain is Solute carrier family 2, facilitated glucose transporter member 4, found in Mus musculus (Mouse).